The sequence spans 346 residues: S-adenosylmethionine:tRNA ribosyltransferase-isomerase (346 aa).

The protein belongs to the QueA family. As to quaternary structure, monomer.

The protein resides in the cytoplasm. It catalyses the reaction 7-aminomethyl-7-carbaguanosine(34) in tRNA + S-adenosyl-L-methionine = epoxyqueuosine(34) in tRNA + adenine + L-methionine + 2 H(+). It participates in tRNA modification; tRNA-queuosine biosynthesis. In terms of biological role, transfers and isomerizes the ribose moiety from AdoMet to the 7-aminomethyl group of 7-deazaguanine (preQ1-tRNA) to give epoxyqueuosine (oQ-tRNA). This chain is S-adenosylmethionine:tRNA ribosyltransferase-isomerase, found in Shewanella frigidimarina (strain NCIMB 400).